Consider the following 547-residue polypeptide: Phosphomethylpyrimidine synthase (547 aa).

Residues N150, M179, Y208, H244, 264–266 (SRG), 305–308 (DGLR), and E344 contribute to the substrate site. H348 contacts Zn(2+). A substrate-binding site is contributed by Y371. Zn(2+) is bound at residue H412. [4Fe-4S] cluster is bound by residues C492, C495, and C500.

It belongs to the ThiC family. The cofactor is [4Fe-4S] cluster.

It carries out the reaction 5-amino-1-(5-phospho-beta-D-ribosyl)imidazole + S-adenosyl-L-methionine = 4-amino-2-methyl-5-(phosphooxymethyl)pyrimidine + CO + 5'-deoxyadenosine + formate + L-methionine + 3 H(+). Its pathway is cofactor biosynthesis; thiamine diphosphate biosynthesis. Catalyzes the synthesis of the hydroxymethylpyrimidine phosphate (HMP-P) moiety of thiamine from aminoimidazole ribotide (AIR) in a radical S-adenosyl-L-methionine (SAM)-dependent reaction. The polypeptide is Phosphomethylpyrimidine synthase (Nocardia farcinica (strain IFM 10152)).